The primary structure comprises 198 residues: Putative nitroreductase MJ1384 (198 aa).

This sequence belongs to the nitroreductase family. Requires FMN as cofactor.

The chain is Putative nitroreductase MJ1384 from Methanocaldococcus jannaschii (strain ATCC 43067 / DSM 2661 / JAL-1 / JCM 10045 / NBRC 100440) (Methanococcus jannaschii).